Consider the following 259-residue polypeptide: Complement factor D (259 aa).

An N-terminal signal peptide occupies residues 1 to 21 (MADRSLHLVVLILLGTALCAA). A propeptide spans 22-26 (QPRGR) (activation peptide). Residues 27–254 (ILRGQEAPSH…YVAWIDGVMA (228 aa)) enclose the Peptidase S1 domain. Residues C52 and C68 are joined by a disulfide bond. Catalysis depends on charge relay system residues H67 and D115. Cystine bridges form between C149–C215, C180–C196, and C205–C230. Residue S209 is the Charge relay system of the active site. The interval 224–228 (TSGSR) is self-inhibitor loop.

It belongs to the peptidase S1 family. CFD is activated by the removal of 5 residues at the N-terminus, named activation peptide, by the MASP-3 isoform of MASP1.

Its subcellular location is the secreted. The enzyme catalyses Selective cleavage of Arg-|-Lys bond in complement factor B when in complex with complement subcomponent C3b or with cobra venom factor.. Its activity is regulated as follows. Circulates in plasma in a mature but self-inhibited form. Activated by factor B (CFB), which displaces the self-inhibition loop. Associates with CFB complexed with complement C3b. Serine protease that initiates the alternative pathway of the complement system, a cascade of proteins that leads to phagocytosis and breakdown of pathogens and signaling that strengthens the adaptive immune system. In contrast to other complement pathways (classical, lectin and GZMK) that are directly activated by pathogens or antigen-antibody complexes, the alternative complement pathway is initiated by the spontaneous hydrolysis of complement C3. The alternative complement pathway acts as an amplification loop that enhances complement activation by mediating the formation of C3 and C5 convertases. Activated CFD cleaves factor B (CFB) when the latter is complexed with complement C3b, activating the C3 convertase of the alternative pathway. The sequence is that of Complement factor D (CFD) from Bos taurus (Bovine).